A 135-amino-acid polypeptide reads, in one-letter code: RuBisCO chaperone RbcX (135 aa).

Residues 103–135 (QHLERMTQVSLSHPSPESEQQQFSDPDWDNLAS) form a disordered region. Over residues 109 to 126 (TQVSLSHPSPESEQQQFS) the composition is skewed to polar residues.

The protein belongs to the RbcX family. As to quaternary structure, homodimer. Interacts with the exposed C-terminal peptide of RbcL ('Glu-459-Asp-468'); binds 1 RbcL peptide per homodimer. Contacts a second RbcL monomer via its peripheral polar surface. A slightly longer RbcL peptide binds to RbcX2 with a higher affinity.

It localises to the carboxysome. It is found in the cytoplasm. An RbcL-specific chaperone. The central cleft of the RbcX homodimer (RbcX2) binds the C-terminus of an RbcL monomer, stabilizing the C-terminus and probably preventing its reassociation with chaperonin GroEL-ES. At the same time the peripheral region of RbcX2 binds a second RbcL monomer, bridging the RbcL homodimers in the correct orientation. The RbcX2(2)-bound RbcL dimers then assemble into the RbcL8 core (RbcL8-(RbcX2)8). RbcS binding triggers the release of RbcX2. Its function is as follows. Required for optimal reconstitution of RuBisCO upon expression of rbcL-rbcS subunits in E.coli. The sequence is that of RuBisCO chaperone RbcX from Anabaena sp. (strain CA / ATCC 33047).